We begin with the raw amino-acid sequence, 418 residues long: BTB and MATH domain-containing protein 41 (418 aa).

A disordered region spans residues methionine 1–isoleucine 33. An MATH domain is found at serine 45–leucine 173. The BTB domain occupies serine 232–tyrosine 293.

As to quaternary structure, interacts with cul-3.

Its pathway is protein modification; protein ubiquitination. Functionally, probable substrate-specific adapter of an E3 ubiquitin-protein ligase complex which mediates the ubiquitination and subsequent proteasomal degradation of target proteins. This Caenorhabditis elegans protein is BTB and MATH domain-containing protein 41 (bath-41).